Here is a 22-residue protein sequence, read N- to C-terminus: Brevinin-2LTa (22 aa).

As to expression, expressed by the skin glands.

The protein localises to the secreted. In terms of biological role, has antibacterial activity. The chain is Brevinin-2LTa from Rana latastei (Italian agile frog).